The chain runs to 175 residues: Adenine phosphoribosyltransferase (175 aa).

The protein belongs to the purine/pyrimidine phosphoribosyltransferase family. Homodimer.

It localises to the cytoplasm. It catalyses the reaction AMP + diphosphate = 5-phospho-alpha-D-ribose 1-diphosphate + adenine. The protein operates within purine metabolism; AMP biosynthesis via salvage pathway; AMP from adenine: step 1/1. Catalyzes a salvage reaction resulting in the formation of AMP, that is energically less costly than de novo synthesis. In Francisella tularensis subsp. tularensis (strain WY96-3418), this protein is Adenine phosphoribosyltransferase.